The sequence spans 703 residues: Hyperosmolality-gated Ca2+ permeable channel 2.3 (703 aa).

Topologically, residues 1 to 3 are extracellular; the sequence is MLL. A helical transmembrane segment spans residues 4–26; that stretch reads SALLTSVGINLGLCFLFFTLYSI. Topologically, residues 27–81 are cytoplasmic; it reads LRKQPSNVTVYGPRLVKKDGKSQQSNEFNLERLLPTAGWVKRALEPTNDEILSNL. The helical transmembrane segment at 82–115 threads the bilayer; the sequence is GLDALVFIRVFVFSIRVFSFASVVGIFILLPVNY. Over 116-143 the chain is Extracellular; that stretch reads MGTEFEEFFDLPKKSMDNFSISNVNDGS. A helical membrane pass occupies residues 144-165; the sequence is NKLWIHFCAIYIFTAVVCSLLY. At 166-355 the chain is on the cytoplasmic side; the sequence is YEHKYILTKR…TASFVRRWIS (190 aa). The stretch at 228 to 300 forms a coiled coil; the sequence is RTDKLKVLMN…LKQSLLAGEE (73 aa). A helical membrane pass occupies residues 356 to 382; it reads NVVVLVAFVALLILYIVPVVLVQGLAN. Over 383–410 the chain is Extracellular; the sequence is LHQLETWFPFLKGILNMKIVSQVITGYL. Residues 411-432 form a helical membrane-spanning segment; that stretch reads PSLIFQLFLLIVPPIMLLLSSM. The Cytoplasmic portion of the chain corresponds to 433–436; the sequence is QGFI. A helical transmembrane segment spans residues 437–463; it reads SHSQIEKSACIKLLIFTVWNSFFANVL. Residues 464-489 are Extracellular-facing; the sequence is SGSALYRVNVFLEPKTIPRVLAAAVP. The helical transmembrane segment at 490-512 threads the bilayer; it reads AQASFFVSYVVTSGWTGLSSEIL. The Cytoplasmic portion of the chain corresponds to 513–540; sequence RLVPLLWSFITKLFGKEDDKEFEVPSTP. A helical transmembrane segment spans residues 541–561; it reads FCQEIPRILFFGLLGITYFFL. S562 is a topological domain (extracellular). The chain crosses the membrane as a helical span at residues 563–586; sequence PLILPFLLVYYCLGYIIYRNQLLN. Residues 587–598 lie on the Cytoplasmic side of the membrane; sequence VYAAKYETGGKF. A helical transmembrane segment spans residues 599-623; the sequence is WPIVHSYTIFSLVLMHIIAVGLFGL. The Extracellular segment spans residues 624–626; sequence KEL. The chain crosses the membrane as a helical span at residues 627–655; sequence PVASSLTIPLPVLTVLFSIYCQRRFLPNF. Residues 656–703 are Cytoplasmic-facing; the sequence is KSYPTQCLVNKDKADEREQNMSEFYSELVVAYRDPALSASQDSRDISP.

It belongs to the CSC1 (TC 1.A.17) family. In terms of assembly, homodimer.

The protein localises to the membrane. Its function is as follows. Acts as an osmosensitive calcium-permeable cation channel. The polypeptide is Hyperosmolality-gated Ca2+ permeable channel 2.3 (Arabidopsis thaliana (Mouse-ear cress)).